A 926-amino-acid chain; its full sequence is Peripheral plasma membrane protein CASK (926 aa).

The Protein kinase domain maps to 12–276 (YELCEVIGKG…VYEALNHPWL (265 aa)). Residues 18–26 (IGKGPFSVV) and K41 contribute to the ATP site. S51 bears the Phosphoserine mark. D141 is a catalytic residue. Phosphoserine; by autocatalysis is present on residues S151 and S155. T182 is modified (phosphothreonine). Positions 305–315 (KGAVLAAVSSH) are calmodulin-binding. S313 carries the post-translational modification Phosphoserine. L27 domains lie at 343–398 (AERA…SPQI) and 402–455 (PSDA…YSDE). The tract at residues 482-909 (MENVTRVRLV…DETIRHLEEA (428 aa)) is required for interaction with NRXN1 (via C-terminal tail). The PDZ domain maps to 490-571 (LVQFQKNTDE…SITFKIVPSY (82 aa)). S570 and Y571 each carry phosphoserine. Residues 574 to 610 (QSSSCERDSPSTSRQSPANGHSSTNNSVSDLPSTTQP) form a disordered region. The SH3 domain occupies 612–682 (GRQIYVRAQF…PSPELQEWRV (71 aa)). The Guanylate kinase-like domain maps to 739–911 (RKTLVLLGAH…TIRHLEEAVE (173 aa)).

It in the N-terminal section; belongs to the protein kinase superfamily. CAMK Ser/Thr protein kinase family. CaMK subfamily. The protein belongs to the MAGUK family. In terms of assembly, CASK and LIN7 form a tripartite complex with CASKIN1. Component of the brain-specific heterotrimeric complex (LIN-10-LIN-2-LIN-7 complex) composed of at least APBA1, CASK, and LIN7, which associates with the motor protein KIF17 to transport vesicles along microtubules. Forms a heterotrimeric complex with DLG1 and LIN7B via their L27 domains. Identified in a complex with ACTN4, IQGAP1, MAGI2, NPHS1, SPTAN1 and SPTBN1. Part of a complex containing CASK, TBR1 and TSPYL2. Interacts with WHRN. Interacts (via the PDZ, SH3 and guanylate kinase-like domains) with NRXN1 (via C-terminus). Interacts with CASKIN1, APBA1, LIN7(A/B/C), and L27 domain of DLG1 and isoform 2 of DLG4. Interacts with FCHSD2. Interacts with KIRREL3. Interacts with TBR1. Interacts with TSPYL2. The cofactor is Unlike other protein kinases, does not require a divalent cation such as magnesium for catalytic activity..

It localises to the nucleus. The protein resides in the cytoplasm. Its subcellular location is the cell membrane. The enzyme catalyses L-seryl-[protein] + ATP = O-phospho-L-seryl-[protein] + ADP + H(+). The catalysed reaction is L-threonyl-[protein] + ATP = O-phospho-L-threonyl-[protein] + ADP + H(+). Its activity is regulated as follows. Differs from archetypal CaMK members in that the kinase domain exhibits a constitutively active conformation and the autoinhibitory region does not engage in direct contact with the ATP-binding cleft, although it still binds Ca(2+)/CAM. Functionally, multidomain scaffolding Mg(2+)-independent protein kinase that catalyzes the phosphotransfer from ATP to proteins such as NRXN1, and plays a role in synaptic transmembrane protein anchoring and ion channel trafficking. Contributes to neural development and regulation of gene expression via interaction with the transcription factor TBR1. Binds to cell-surface proteins, including amyloid precursor protein, neurexins, and syndecans. May mediate a link between the extracellular matrix and the actin cytoskeleton via its interaction with syndecan and with the actin/spectrin-binding protein 4.1. Component of the LIN-10-LIN-2-LIN-7 complex, which associates with the motor protein KIF17 to transport vesicles containing N-methyl-D-aspartate (NMDA) receptor subunit NR2B along microtubules. The chain is Peripheral plasma membrane protein CASK from Mus musculus (Mouse).